Here is a 317-residue protein sequence, read N- to C-terminus: tRNA-dihydrouridine(16) synthase (317 aa).

Residues 7–9 and Q68 each bind FMN; that span reads PME. Residue C98 is the Proton donor of the active site. FMN contacts are provided by residues K139, 199-201, and 223-224; these read NGE and GR.

The protein belongs to the Dus family. DusC subfamily. FMN serves as cofactor.

It carries out the reaction 5,6-dihydrouridine(16) in tRNA + NADP(+) = uridine(16) in tRNA + NADPH + H(+). The catalysed reaction is 5,6-dihydrouridine(16) in tRNA + NAD(+) = uridine(16) in tRNA + NADH + H(+). In terms of biological role, catalyzes the synthesis of 5,6-dihydrouridine (D), a modified base found in the D-loop of most tRNAs, via the reduction of the C5-C6 double bond in target uridines. Specifically modifies U16 in tRNAs. The chain is tRNA-dihydrouridine(16) synthase from Pseudomonas syringae pv. tomato (strain ATCC BAA-871 / DC3000).